Reading from the N-terminus, the 143-residue chain is Putative 2'-deoxynucleoside 5'-phosphate N-hydrolase 1 (143 aa).

Residues H37, E82, and 106–108 (SAM) each bind substrate.

The protein belongs to the 2'-deoxynucleoside 5'-phosphate N-hydrolase 1 family. As to quaternary structure, monomer and homodimer.

The enzyme catalyses a pyrimidine 2'-deoxyribonucleoside 5'-phosphate + H2O = a pyrimidine nucleobase + 2-deoxy-D-ribose 5-phosphate. It catalyses the reaction a purine 2'-deoxyribonucleoside 5'-phosphate + H2O = a purine nucleobase + 2-deoxy-D-ribose 5-phosphate. Catalyzes the cleavage of the N-glycosidic bond of deoxyribonucleoside 5'-monophosphates to yield deoxyribose 5-phosphate and a purine or pyrimidine base. The chain is Putative 2'-deoxynucleoside 5'-phosphate N-hydrolase 1 from Thermofilum pendens (strain DSM 2475 / Hrk 5).